Here is a 442-residue protein sequence, read N- to C-terminus: Histidine--tRNA ligase (442 aa).

This sequence belongs to the class-II aminoacyl-tRNA synthetase family. Homodimer.

It localises to the cytoplasm. It catalyses the reaction tRNA(His) + L-histidine + ATP = L-histidyl-tRNA(His) + AMP + diphosphate + H(+). This is Histidine--tRNA ligase from Helicobacter acinonychis (strain Sheeba).